The primary structure comprises 807 residues: Putative AC transposase (807 aa).

Disordered regions lie at residues 42–140 and 785–807; these read GLKR…KKCT and MDED…GSSP. Polar residues predominate over residues 84–98; it reads QSVSSSNANGTATDP. 10 repeat units span residues 109–110, 111–112, 113–114, 115–116, 117–118, 119–120, 121–122, 123–124, 125–126, and 127–128. Residues 109–128 are 10 X 2 AA tandem repeats of P-[QE]; the sequence is PQPQPQPQPEPQPQPQPEPE. Residues 110 to 125 are compositionally biased toward pro residues; the sequence is QPQPQPQPEPQPQPQP.

This Zea mays (Maize) protein is Putative AC transposase.